We begin with the raw amino-acid sequence, 280 residues long: Diaminopimelate epimerase (280 aa).

Residues N13 and N66 each coordinate substrate. C75 functions as the Proton donor in the catalytic mechanism. Residues 76–77, N165, N198, and 216–217 contribute to the substrate site; these read GN and ER. The active-site Proton acceptor is the C225. Residue 226–227 participates in substrate binding; that stretch reads GT.

This sequence belongs to the diaminopimelate epimerase family. In terms of assembly, homodimer.

Its subcellular location is the cytoplasm. It carries out the reaction (2S,6S)-2,6-diaminopimelate = meso-2,6-diaminopimelate. It functions in the pathway amino-acid biosynthesis; L-lysine biosynthesis via DAP pathway; DL-2,6-diaminopimelate from LL-2,6-diaminopimelate: step 1/1. Functionally, catalyzes the stereoinversion of LL-2,6-diaminopimelate (L,L-DAP) to meso-diaminopimelate (meso-DAP), a precursor of L-lysine and an essential component of the bacterial peptidoglycan. The polypeptide is Diaminopimelate epimerase (Cyanothece sp. (strain PCC 7425 / ATCC 29141)).